We begin with the raw amino-acid sequence, 211 residues long: ATP phosphoribosyltransferase (211 aa).

This sequence belongs to the ATP phosphoribosyltransferase family. Short subfamily. Heteromultimer composed of HisG and HisZ subunits.

The protein localises to the cytoplasm. It carries out the reaction 1-(5-phospho-beta-D-ribosyl)-ATP + diphosphate = 5-phospho-alpha-D-ribose 1-diphosphate + ATP. The protein operates within amino-acid biosynthesis; L-histidine biosynthesis; L-histidine from 5-phospho-alpha-D-ribose 1-diphosphate: step 1/9. Its function is as follows. Catalyzes the condensation of ATP and 5-phosphoribose 1-diphosphate to form N'-(5'-phosphoribosyl)-ATP (PR-ATP). Has a crucial role in the pathway because the rate of histidine biosynthesis seems to be controlled primarily by regulation of HisG enzymatic activity. This chain is ATP phosphoribosyltransferase, found in Bacillus mycoides (strain KBAB4) (Bacillus weihenstephanensis).